Consider the following 246-residue polypeptide: Large ribosomal subunit protein uL30-like 1 (246 aa).

A Phosphoserine modification is found at serine 54.

It belongs to the universal ribosomal protein uL30 family.

The sequence is that of Large ribosomal subunit protein uL30-like 1 (RPL7L1) from Pongo abelii (Sumatran orangutan).